We begin with the raw amino-acid sequence, 119 residues long: Beta-2-microglobulin (119 aa).

The N-terminal stretch at 1–21 is a signal peptide; the sequence is MGKAAAVVLVTLVALLGLAQA. Positions 25–113 constitute an Ig-like C1-type domain; sequence PKVQVYSRFP…HETLKEPQVY (89 aa). Cys-45 and Cys-100 form a disulfide bridge.

Belongs to the beta-2-microglobulin family. In terms of assembly, heterodimer of an alpha chain and a beta chain. Beta-2-microglobulin is the beta-chain of major histocompatibility complex class I molecules.

It localises to the secreted. Functionally, component of the class I major histocompatibility complex (MHC). Involved in the presentation of peptide antigens to the immune system. The protein is Beta-2-microglobulin (B2M) of Gallus gallus (Chicken).